Consider the following 123-residue polypeptide: Large ribosomal subunit protein bL20 (123 aa).

The span at 1–15 shows a compositional bias: basic residues; the sequence is MARVKRSVNAKKKRR. The interval 1–23 is disordered; the sequence is MARVKRSVNAKKKRREVLDQASG.

This sequence belongs to the bacterial ribosomal protein bL20 family.

Its function is as follows. Binds directly to 23S ribosomal RNA and is necessary for the in vitro assembly process of the 50S ribosomal subunit. It is not involved in the protein synthesizing functions of that subunit. The protein is Large ribosomal subunit protein bL20 of Cutibacterium acnes (strain DSM 16379 / KPA171202) (Propionibacterium acnes).